Here is a 426-residue protein sequence, read N- to C-terminus: Serine--tRNA ligase (426 aa).

Position 233–235 (233–235 (TAE)) interacts with L-serine. 264–266 (RRE) contributes to the ATP binding site. Glu-287 serves as a coordination point for L-serine. 351 to 354 (EISS) contributes to the ATP binding site. Ser-386 provides a ligand contact to L-serine.

This sequence belongs to the class-II aminoacyl-tRNA synthetase family. Type-1 seryl-tRNA synthetase subfamily. Homodimer. The tRNA molecule binds across the dimer.

Its subcellular location is the cytoplasm. The enzyme catalyses tRNA(Ser) + L-serine + ATP = L-seryl-tRNA(Ser) + AMP + diphosphate + H(+). It catalyses the reaction tRNA(Sec) + L-serine + ATP = L-seryl-tRNA(Sec) + AMP + diphosphate + H(+). It functions in the pathway aminoacyl-tRNA biosynthesis; selenocysteinyl-tRNA(Sec) biosynthesis; L-seryl-tRNA(Sec) from L-serine and tRNA(Sec): step 1/1. Catalyzes the attachment of serine to tRNA(Ser). Is also able to aminoacylate tRNA(Sec) with serine, to form the misacylated tRNA L-seryl-tRNA(Sec), which will be further converted into selenocysteinyl-tRNA(Sec). This is Serine--tRNA ligase from Prochlorococcus marinus (strain NATL2A).